Reading from the N-terminus, the 516-residue chain is Cytochrome P450 monooxygenase dtxS2 (516 aa).

Residues 23–43 (ILASVIVLLGLKVATILYTAF) form a helical membrane-spanning segment. Residue asparagine 187 is glycosylated (N-linked (GlcNAc...) asparagine). The chain crosses the membrane as a helical span at residues 229–249 (VLVPLLVFPYISWLLVWWLLS). Cysteine 458 contacts heme.

The protein belongs to the cytochrome P450 family. Heme serves as cofactor.

It localises to the membrane. It functions in the pathway secondary metabolite biosynthesis. Functionally, cytochrome P450 monooxygenase; part of the gene cluster that mediates the biosynthesis of destruxins, insecticidal cyclic hexadepsipeptides which induce flaccid paralysis and visceral muscle contraction in insects through targeting the calcium channels and vacuolar-type ATPases. The aldo-keto reductase dtxS3 converts alpha-ketoisocaproic acid from deaminated leucine into alpha-hydroxyisocaproic acid (HIC), which is the first substrate for destruxin assembly by dtxS1. L-aspartate decarboxylase dtxS4 converts aspartic acid into beta-alanine, the last substrate for the destruxin assembly line performed by dtxS1. The nonribosomal peptide synthetase dtxS1 synthesizes destruxins B and B2, whereas the cytochrome P450 monooxygenase dtxS2 is required to convert destruxin B into other destruxin derivatives, including destructins C, D, A and E. Destruxin E-diol (ED) is further produced in a non-enzymatic manner from destruxin E. Destruxins play an important role in virulence and escape from insect host immune defenses. In Metarhizium robertsii (strain ARSEF 23 / ATCC MYA-3075) (Metarhizium anisopliae (strain ARSEF 23)), this protein is Cytochrome P450 monooxygenase dtxS2.